The sequence spans 404 residues: Spore germination protein YndF (404 aa).

A signal peptide spans methionine 1–glycine 24. Cysteine 25 carries N-palmitoyl cysteine lipidation. Cysteine 25 carries S-diacylglycerol cysteine lipidation.

It belongs to the GerABKC lipoprotein family.

The protein localises to the cell membrane. May be involved in spore germination. The polypeptide is Spore germination protein YndF (yndF) (Bacillus subtilis (strain 168)).